The chain runs to 528 residues: Chaperonin GroEL, chloroplastic (528 aa).

Residues 29 to 32 (TLGP), 86 to 90 (DGTTT), glycine 414, and aspartate 496 contribute to the ATP site.

Belongs to the chaperonin (HSP60) family. Forms a cylinder of 14 subunits composed of two heptameric rings stacked back-to-back. Interacts with the co-chaperonin GroES.

The protein resides in the plastid. The protein localises to the chloroplast. The enzyme catalyses ATP + H2O + a folded polypeptide = ADP + phosphate + an unfolded polypeptide.. Its function is as follows. Together with its co-chaperonin GroES, plays an essential role in assisting protein folding. The GroEL-GroES system forms a nano-cage that allows encapsulation of the non-native substrate proteins and provides a physical environment optimized to promote and accelerate protein folding. This is Chaperonin GroEL, chloroplastic from Gracilaria tenuistipitata var. liui (Red alga).